Reading from the N-terminus, the 288-residue chain is ATP synthase gamma chain (288 aa).

The protein belongs to the ATPase gamma chain family. As to quaternary structure, F-type ATPases have 2 components, CF(1) - the catalytic core - and CF(0) - the membrane proton channel. CF(1) has five subunits: alpha(3), beta(3), gamma(1), delta(1), epsilon(1). CF(0) has three main subunits: a, b and c.

The protein resides in the cell inner membrane. Its function is as follows. Produces ATP from ADP in the presence of a proton gradient across the membrane. The gamma chain is believed to be important in regulating ATPase activity and the flow of protons through the CF(0) complex. In Rickettsia typhi (strain ATCC VR-144 / Wilmington), this protein is ATP synthase gamma chain.